The following is a 218-amino-acid chain: Probable chemoreceptor glutamine deamidase CheD (218 aa).

This sequence belongs to the CheD family.

The enzyme catalyses L-glutaminyl-[protein] + H2O = L-glutamyl-[protein] + NH4(+). Functionally, probably deamidates glutamine residues to glutamate on methyl-accepting chemotaxis receptors (MCPs), playing an important role in chemotaxis. This Saccharophagus degradans (strain 2-40 / ATCC 43961 / DSM 17024) protein is Probable chemoreceptor glutamine deamidase CheD.